The chain runs to 430 residues: Probable aspartic-type endopeptidase ARB_07403 (430 aa).

The signal sequence occupies residues 1-17; it reads MHVSTLLVAVLLPLALS. A propeptide spans 18-87 (activation peptide); it reads KPTPRKKTGS…SKATAGSGKE (70 aa). The disordered stretch occupies residues 66–105; that stretch reads YHPQHISKLPGNSKATAGSGKEGVESQDEKGEVVNNPTNH. Over residues 87–97 the composition is skewed to basic and acidic residues; that stretch reads EGVESQDEKGE. The 319-residue stretch at 109–427 folds into the Peptidase A1 domain; that stretch reads FLSPVTIGGQ…DQRGPSISLA (319 aa). D125 is a catalytic residue. Residue N306 is glycosylated (N-linked (GlcNAc...) asparagine). D314 is an active-site residue.

It belongs to the peptidase A1 family.

The protein localises to the secreted. In terms of biological role, probable secreted aspartic-type endopeptidase which contributes to virulence. The protein is Probable aspartic-type endopeptidase ARB_07403 of Arthroderma benhamiae (strain ATCC MYA-4681 / CBS 112371) (Trichophyton mentagrophytes).